The sequence spans 2195 residues: Genome polyprotein (2195 aa).

Residue Gly-2 is the site of N-myristoyl glycine; by host attachment. At 2 to 1505 (GAQVSTQKTG…HVSRAFICLQ (1504 aa)) the chain is on the cytoplasmic side. The interval 567-583 (LLQGDVVEAVENAVARV) is amphipathic alpha-helix. Catalysis depends on for protease 2A activity residues His-882 and Asp-900. Zn(2+) contacts are provided by Cys-917 and Cys-919. Cys-971 functions as the For protease 2A activity in the catalytic mechanism. Residues Cys-977 and His-979 each coordinate Zn(2+). The membrane-binding stretch occupies residues 1111 to 1183 (NNGWLKKFTE…EQSAPSQSDQ (73 aa)). The oligomerization stretch occupies residues 1111–1249 (NNGWLKKFTE…SPGAGKSVAT (139 aa)). An RNA-binding region spans residues 1132–1136 (SIKIQ). The region spanning 1215–1371 (EKKMSNYIQF…SMYSQNGKIN (157 aa)) is the SF3 helicase domain. Residues Cys-1379, Cys-1391, and Cys-1396 each contribute to the Zn(2+) site. The segment at 1379–1396 (CDEECCPVNFKRCCPLVC) adopts a C4-type; degenerate zinc-finger fold. The segment at 1423-1430 (EYNHRHSV) is RNA-binding. The interval 1434-1439 (LEALFQ) is oligomerization. An intramembrane segment occupies 1506–1521 (ALTTFVSVAGIIYIIY). Over 1522–2195 (KLFAGFQGAY…TLRRKWLDSF (674 aa)) the chain is Cytoplasmic. At Tyr-1531 the chain carries O-(5'-phospho-RNA)-tyrosine. Positions 1551 to 1729 (GPAFEFAVAM…FSAALLKHYF (179 aa)) constitute a Peptidase C3 domain. Residues His-1590, Glu-1621, and Cys-1697 each act as for protease 3C activity in the active site. Residues 1960-2076 (GHLIAFDYSG…SYPWPIDASL (117 aa)) form the RdRp catalytic domain. Mg(2+)-binding residues include Asp-1966 and Asp-2062.

Belongs to the picornaviruses polyprotein family. As to quaternary structure, interacts with capsid protein VP1 and capsid protein VP3 to form heterotrimeric protomers. Interacts with capsid protein VP0, and capsid protein VP3 to form heterotrimeric protomers. Five protomers subsequently associate to form pentamers which serve as building blocks for the capsid. Interacts with capsid protein VP2, capsid protein VP3 and capsid protein VP4 following cleavage of capsid protein VP0. In terms of assembly, interacts with capsid protein VP1 and capsid protein VP3 in the mature capsid. As to quaternary structure, interacts with capsid protein VP0 and capsid protein VP1 to form heterotrimeric protomers. Five protomers subsequently associate to form pentamers which serve as building blocks for the capsid. Interacts with capsid protein VP4 in the mature capsid. Interacts with protein 2C; this interaction may be important for virion morphogenesis. Interacts with capsid protein VP1 and capsid protein VP3. In terms of assembly, homodimer. As to quaternary structure, homohexamer; forms a hexameric ring structure with 6-fold symmetry characteristic of AAA+ ATPases. Interacts (via N-terminus) with host RTN3 (via reticulon domain); this interaction is important for viral replication. Interacts with capsid protein VP3; this interaction may be important for virion morphogenesis. Interacts with protein 3CD. In terms of assembly, homodimer. Interacts with host GBF1. Interacts (via GOLD domain) with host ACBD3 (via GOLD domain); this interaction allows the formation of a viral protein 3A/ACBD3 heterotetramer with a 2:2 stoichiometry, which will stimulate the recruitment of host PI4KB in order to synthesize PI4P at the viral RNA replication sites. As to quaternary structure, interacts with RNA-directed RNA polymerase. Interacts with protein 3AB and with RNA-directed RNA polymerase. In terms of assembly, interacts with Viral protein genome-linked and with protein 3CD. It depends on Mg(2+) as a cofactor. Post-translationally, specific enzymatic cleavages in vivo by the viral proteases yield processing intermediates and the mature proteins. Myristoylation is required for the formation of pentamers during virus assembly. Further assembly of 12 pentamers and a molecule of genomic RNA generates the provirion. In terms of processing, during virion maturation, immature virions are rendered infectious following cleavage of VP0 into VP4 and VP2. This maturation seems to be an autocatalytic event triggered by the presence of RNA in the capsid and it is followed by a conformational change infectious virion. Post-translationally, myristoylation is required during RNA encapsidation and formation of the mature virus particle. VPg is uridylylated by the polymerase into VPg-pUpU. This acts as a nucleotide-peptide primer for the genomic RNA replication.

Its subcellular location is the virion. It localises to the host cytoplasm. It is found in the host cytoplasmic vesicle membrane. The protein resides in the host nucleus. The catalysed reaction is a ribonucleoside 5'-triphosphate + H2O = a ribonucleoside 5'-diphosphate + phosphate + H(+). It catalyses the reaction Selective cleavage of Tyr-|-Gly bond in the picornavirus polyprotein.. The enzyme catalyses RNA(n) + a ribonucleoside 5'-triphosphate = RNA(n+1) + diphosphate. It carries out the reaction Selective cleavage of Gln-|-Gly bond in the poliovirus polyprotein. In other picornavirus reactions Glu may be substituted for Gln, and Ser or Thr for Gly.. Replication or transcription is subject to high level of random mutations by the nucleotide analog ribavirin. Forms an icosahedral capsid of pseudo T=3 symmetry with capsid proteins VP2 and VP3. The capsid is 300 Angstroms in diameter, composed of 60 copies of each capsid protein and enclosing the viral positive strand RNA genome. Capsid protein VP1 mainly forms the vertices of the capsid. Capsid protein VP1 interacts with host cell receptor to provide virion attachment to target host cells. This attachment induces virion internalization. Tyrosine kinases are probably involved in the entry process. After binding to its receptor, the capsid undergoes conformational changes. Capsid protein VP1 N-terminus (that contains an amphipathic alpha-helix) and capsid protein VP4 are externalized. Together, they shape a pore in the host membrane through which viral genome is translocated to host cell cytoplasm. Functionally, forms an icosahedral capsid of pseudo T=3 symmetry with capsid proteins VP2 and VP3. The capsid is 300 Angstroms in diameter, composed of 60 copies of each capsid protein and enclosing the viral positive strand RNA genome. Its function is as follows. Lies on the inner surface of the capsid shell. After binding to the host receptor, the capsid undergoes conformational changes. Capsid protein VP4 is released, Capsid protein VP1 N-terminus is externalized, and together, they shape a pore in the host membrane through which the viral genome is translocated into the host cell cytoplasm. In terms of biological role, component of immature procapsids, which is cleaved into capsid proteins VP4 and VP2 after maturation. Allows the capsid to remain inactive before the maturation step. Cysteine protease that cleaves viral polyprotein and specific host proteins. It is responsible for the autocatalytic cleavage between the P1 and P2 regions, which is the first cleavage occurring in the polyprotein. Also cleaves the host translation initiation factor EIF4G1, in order to shut down the capped cellular mRNA translation. Inhibits the host nucleus-cytoplasm protein and RNA trafficking by cleaving host members of the nuclear pores. Counteracts stress granule formation probably by antagonizing its assembly or promoting its dissassembly. Functionally, plays an essential role in the virus replication cycle by acting as a viroporin. Creates a pore in the host endoplasmic reticulum and as a consequence releases Ca2+ in the cytoplasm of infected cell. In turn, high levels of cytoplasmic calcium may trigger membrane trafficking and transport of viral ER-associated proteins to viroplasms, sites of viral genome replication. Its function is as follows. Induces and associates with structural rearrangements of intracellular membranes. Displays RNA-binding, nucleotide binding and NTPase activities. May play a role in virion morphogenesis and viral RNA encapsidation by interacting with the capsid protein VP3. In terms of biological role, localizes the viral replication complex to the surface of membranous vesicles. Together with protein 3CD binds the Cis-Active RNA Element (CRE) which is involved in RNA synthesis initiation. Acts as a cofactor to stimulate the activity of 3D polymerase, maybe through a nucleid acid chaperone activity. Localizes the viral replication complex to the surface of membranous vesicles. It inhibits host cell endoplasmic reticulum-to-Golgi apparatus transport and causes the disassembly of the Golgi complex, possibly through GBF1 interaction. This would result in depletion of MHC, trail receptors and IFN receptors at the host cell surface. Plays an essential role in viral RNA replication by recruiting ACBD3 and PI4KB at the viral replication sites, thereby allowing the formation of the rearranged membranous structures where viral replication takes place. Functionally, acts as a primer for viral RNA replication and remains covalently bound to viral genomic RNA. VPg is uridylylated prior to priming replication into VPg-pUpU. The oriI viral genomic sequence may act as a template for this. The VPg-pUpU is then used as primer on the genomic RNA poly(A) by the RNA-dependent RNA polymerase to replicate the viral genome. During genome replication, the VPg-RNA linkage is removed by the host TDP2, thereby accelerating replication. During the late stage of the replication cycle, host TDP2 is excluded from sites of viral RNA synthesis and encapsidation, allowing for the generation of progeny virions. Its function is as follows. Involved in the viral replication complex and viral polypeptide maturation. It exhibits protease activity with a specificity and catalytic efficiency that is different from protease 3C. Protein 3CD lacks polymerase activity. The 3C domain in the context of protein 3CD may have an RNA binding activity. Protein 3CD binds to the 5'UTR of the viral genome. In terms of biological role, replicates the viral genomic RNA on the surface of intracellular membranes. May form linear arrays of subunits that propagate along a strong head-to-tail interaction called interface-I. Covalently attaches UMP to a tyrosine of VPg, which is used to prime RNA synthesis. The positive stranded RNA genome is first replicated at virus induced membranous vesicles, creating a dsRNA genomic replication form. This dsRNA is then used as template to synthesize positive stranded RNA genomes. ss(+)RNA genomes are either translated, replicated or encapsidated. Major viral protease that mediates proteolytic processing of the polyprotein. Cleaves host EIF5B, contributing to host translation shutoff. Also cleaves host PABPC1, contributing to host translation shutoff. Cleaves host NLRP1, triggers host N-glycine-mediated degradation of the autoinhibitory NLRP1 N-terminal fragment. This chain is Genome polyprotein, found in Echovirus 11 (strain Gregory).